The primary structure comprises 735 residues: 1,4-alpha-glucan branching enzyme GlgB (735 aa).

Residue aspartate 418 is the Nucleophile of the active site. Glutamate 471 serves as the catalytic Proton donor.

Belongs to the glycosyl hydrolase 13 family. GlgB subfamily. As to quaternary structure, monomer.

The enzyme catalyses Transfers a segment of a (1-&gt;4)-alpha-D-glucan chain to a primary hydroxy group in a similar glucan chain.. It participates in glycan biosynthesis; glycogen biosynthesis. Functionally, catalyzes the formation of the alpha-1,6-glucosidic linkages in glycogen by scission of a 1,4-alpha-linked oligosaccharide from growing alpha-1,4-glucan chains and the subsequent attachment of the oligosaccharide to the alpha-1,6 position. In Agrobacterium fabrum (strain C58 / ATCC 33970) (Agrobacterium tumefaciens (strain C58)), this protein is 1,4-alpha-glucan branching enzyme GlgB.